Reading from the N-terminus, the 517-residue chain is Arp2/3 complex-activating protein rickA (517 aa).

Disordered stretches follow at residues 313-441 (LENN…SKPA) and 461-517 (KVSD…SFVR). Composition is skewed to pro residues over residues 319–340 (PPSP…PSPL) and 347–378 (SSPP…PPMA). In terms of domain architecture, WH2 spans 406–423 (DTSDLMREIAGPKKLKKV). A central and acidic domains region spans residues 444–477 (VNALSGLESIFARRAVIKVSDSSSSESDSGNWSD). A compositionally biased stretch (low complexity) spans 463–479 (SDSSSSESDSGNWSDVS). Positions 500–517 (THAQKINNRNSQNPSFVR) are enriched in polar residues.

In terms of assembly, homodimer.

The protein localises to the cell surface. Functionally, recruits and activates the Arp2/3 complex, which in turn leads to actin polymerization, promoting Rickettsia motility during infection. The protein is Arp2/3 complex-activating protein rickA (rickA) of Rickettsia conorii (strain ATCC VR-613 / Malish 7).